Reading from the N-terminus, the 483-residue chain is ATP synthase subunit beta (483 aa).

162–169 contributes to the ATP binding site; the sequence is GGAGVGKT.

This sequence belongs to the ATPase alpha/beta chains family. As to quaternary structure, F-type ATPases have 2 components, CF(1) - the catalytic core - and CF(0) - the membrane proton channel. CF(1) has five subunits: alpha(3), beta(3), gamma(1), delta(1), epsilon(1). CF(0) has four main subunits: a(1), b(1), b'(1) and c(9-12).

It is found in the cellular thylakoid membrane. It carries out the reaction ATP + H2O + 4 H(+)(in) = ADP + phosphate + 5 H(+)(out). Functionally, produces ATP from ADP in the presence of a proton gradient across the membrane. The catalytic sites are hosted primarily by the beta subunits. The sequence is that of ATP synthase subunit beta from Prochloron didemni.